We begin with the raw amino-acid sequence, 491 residues long: Anhydromuropeptide permease (491 aa).

The Cytoplasmic portion of the chain corresponds to 1–11 (MSSQYLRIFQQ). Residues 12–32 (PRSAILLILGFASGLPLALTS) form a helical membrane-spanning segment. Residues 33 to 47 (GTLQAWMTVENIDLK) are Periplasmic-facing. Residues 48–61 (TIGFFSLVGQAYVF) form a helical membrane-spanning segment. At 62–81 (KFLWSPLMDRYTPPFFGRRR) the chain is on the cytoplasmic side. The chain crosses the membrane as a helical span at residues 82–105 (GWLLATQILLLVAIAAMGFLEPGT). Gln-106 is a topological domain (periplasmic). Residues 107–124 (LRWMAALAVVIAFCSASQ) traverse the membrane as a helical segment. Residues 125-221 (DIVFDAWKTD…VAPLRDFFGR (97 aa)) lie on the Cytoplasmic side of the membrane. A helical transmembrane segment spans residues 222 to 240 (NNAWLILLLIVLYKLGDAF). The Periplasmic portion of the chain corresponds to 241 to 264 (AMSLTTTFLIRGVGFDAGEVGVVN). The chain crosses the membrane as a helical span at residues 265–284 (KTLGLLATIVGALYGGILMQ). The Cytoplasmic segment spans residues 285–287 (RLS). A helical transmembrane segment spans residues 288–303 (LFRALLIFGILQGASN). Residues 304 to 327 (AGYWLLSITDKHLYSMGAAVFFEN) are Periplasmic-facing. The chain crosses the membrane as a helical span at residues 328-346 (LCGGMGTSAFVALLMTLCN). Residues 347-421 (KSFSATQFAL…NDNFISRTAY (75 aa)) lie on the Cytoplasmic side of the membrane. The chain crosses the membrane as a helical span at residues 422 to 453 (PAGYAFAMWTLAAGVSLLAVWLLLLTMDALDL). Residues 454-457 (THFS) are Periplasmic-facing. Residues 458-485 (FLPALLEVGVLVALSGVVLGGLLDYLAL) form a helical membrane-spanning segment. The Cytoplasmic segment spans residues 486 to 491 (RKTHLT).

Belongs to the major facilitator superfamily.

It is found in the cell inner membrane. Its function is as follows. Permease involved in cell wall peptidoglycan recycling. Transports, from the periplasm into the cytoplasm, the disaccharide N-acetylglucosaminyl-beta-1,4-anhydro-N-acetylmuramic acid (GlcNAc-anhMurNAc) and GlcNAc-anhMurNAc-peptides. Transport is dependent on the proton motive force. In Escherichia coli O157:H7, this protein is Anhydromuropeptide permease (ampG).